Reading from the N-terminus, the 557-residue chain is Arginine--tRNA ligase (557 aa).

Positions 132–142 match the 'HIGH' region motif; it reads ANPTGDLHLGH.

This sequence belongs to the class-I aminoacyl-tRNA synthetase family. In terms of assembly, monomer.

It is found in the cytoplasm. The catalysed reaction is tRNA(Arg) + L-arginine + ATP = L-arginyl-tRNA(Arg) + AMP + diphosphate. This chain is Arginine--tRNA ligase, found in Geobacillus kaustophilus (strain HTA426).